The primary structure comprises 704 residues: MAQDVLTDLNKVRNIGIMAHIDAGKTTTTERILYYTGITHKIGEVHDGAATMDWMAQEQERGITITSAATTCFWNKNQINIIDTPGHVDFTVEVERSLRVLDGAVAVFDGKEGVEPQSETVWRQADKYDVPRICFVNKMDKLGADFYFTVDTIVNRLGAKPLVIQLPIGAEGGFEGVIDLVEMRALTWRGDSKGDVELGAKYDIEEIPADLKDKADEYRAKLLETVAETDDALLEKYFGGEELTVAEIKAAIRKLTVNSEIYPVLCGSAFKNRGVQPMLDAVIDYLPSPLDVPPMEGHDVRDEEKIIIRKPDSTEPFSALAFKVAVHPFFGRLTYVRVYSGHIASGSQVINSTKGKKERIGKIFQMHSNKENPVDSVTAGHIYAVIGLKDTTTGDTLCDPQDQIVLESMTFPEPVIEVAIEPKTKADQEKLGVAIQKLAEEDPTFRTEQNQETGQTVIKGMGELHLDILVDRMKREFNVEANVGKPQVAYRETIRGTVDKHDFTHKKQTGGSGQFAKIQIKIEPMEVTAEKTYEFDNKVTGGRVPREYIPSVDAGIQDALQVGILAGYPMVGVKATLLDGAAHDVDSSEMAFKIAGSMAFKEAARKAKPVLLEPLMAVEVRTPEEYMGDVIGDLNSRRGQIQAMEDASGVKVITANVPLSEMFGYVGDLRSKTSGRAVYSMSFGSYAEVPKAVADEIVQKNKGE.

Positions 10–290 (NKVRNIGIMA…AVIDYLPSPL (281 aa)) constitute a tr-type G domain. GTP-binding positions include 19-26 (AHIDAGKT), 83-87 (DTPGH), and 137-140 (NKMD).

It belongs to the TRAFAC class translation factor GTPase superfamily. Classic translation factor GTPase family. EF-G/EF-2 subfamily.

Its subcellular location is the cytoplasm. Functionally, catalyzes the GTP-dependent ribosomal translocation step during translation elongation. During this step, the ribosome changes from the pre-translocational (PRE) to the post-translocational (POST) state as the newly formed A-site-bound peptidyl-tRNA and P-site-bound deacylated tRNA move to the P and E sites, respectively. Catalyzes the coordinated movement of the two tRNA molecules, the mRNA and conformational changes in the ribosome. The chain is Elongation factor G from Clavibacter sepedonicus (Clavibacter michiganensis subsp. sepedonicus).